We begin with the raw amino-acid sequence, 365 residues long: Chloroplast protein FOR GROWTH AND FERTILITY 1 (365 aa).

Disordered stretches follow at residues 1 to 30 (MERL…LPRL) and 62 to 90 (YTPI…PGFL). Residues 1–79 (MERLLQPSSS…TNNSFNGSPK (79 aa)) constitute a chloroplast transit peptide. Composition is skewed to low complexity over residues 7–24 (PSSS…SRTS) and 62–77 (YTPI…FNGS). A run of 7 helical transmembrane segments spans residues 109–129 (VILI…PPAF), 139–159 (GWLT…LSGP), 182–202 (ALWG…FLLL), 218–238 (IVGL…SEIP), 274–294 (GVVH…LALP), 301–321 (AFLI…TAFI), and 345–365 (LVAI…FSLY).

As to expression, mostly expressed in leaves and flowers, to a lower extent, in stems, roots, floral bud, inflorescence and siliques, and, barely, in seedlings.

It is found in the plastid. The protein localises to the chloroplast membrane. The protein resides in the plastid membrane. In terms of biological role, together with CGF2, essential protein which supports female gametogenesis and embryogenesis, probably by securing local energy supply. This Arabidopsis thaliana (Mouse-ear cress) protein is Chloroplast protein FOR GROWTH AND FERTILITY 1.